We begin with the raw amino-acid sequence, 310 residues long: MEIPHIPVLLNEVQEIFKNLKTGYFLDCTLGFGGHSEALLKNHPDLKFIACDQDQQALEFSKKRLKDFHNRITFIQSNFSEVLEKISYKEELRGILADIGVSSFQLDNNERGFSVNSDFLDMRMNQNSKISAYEIINTYTKEQLTSIFKDYGELHDAHFIAEKICLERSKNPIKSAKELYQIIGKGKQNHRKISKATLAFQAIRIEVNQELKVLKDFLGHLENLKPKNCILAIISFHSLEDRIVKNFFKKWSKNCICDEKIMRCECGNNHSLGQIITKKAISASKEELLKNSRSSCAKMRAFYFNNLDNK.

Residues G33 to H35, D52, F79, D98, and Q105 contribute to the S-adenosyl-L-methionine site.

The protein belongs to the methyltransferase superfamily. RsmH family.

Its subcellular location is the cytoplasm. The enzyme catalyses cytidine(1402) in 16S rRNA + S-adenosyl-L-methionine = N(4)-methylcytidine(1402) in 16S rRNA + S-adenosyl-L-homocysteine + H(+). In terms of biological role, specifically methylates the N4 position of cytidine in position 1402 (C1402) of 16S rRNA. This is Ribosomal RNA small subunit methyltransferase H from Campylobacter jejuni subsp. jejuni serotype O:6 (strain 81116 / NCTC 11828).